Reading from the N-terminus, the 165-residue chain is Protein-export protein SecB (165 aa).

The protein belongs to the SecB family. In terms of assembly, homotetramer, a dimer of dimers. One homotetramer interacts with 1 SecA dimer.

Its subcellular location is the cytoplasm. Its function is as follows. One of the proteins required for the normal export of preproteins out of the cell cytoplasm. It is a molecular chaperone that binds to a subset of precursor proteins, maintaining them in a translocation-competent state. It also specifically binds to its receptor SecA. The sequence is that of Protein-export protein SecB from Marinobacter nauticus (strain ATCC 700491 / DSM 11845 / VT8) (Marinobacter aquaeolei).